Reading from the N-terminus, the 134-residue chain is Small ribosomal subunit protein uS9 (134 aa).

The segment at 113-134 (REVERKKYGLKKARRAPQFSKR) is disordered. Over residues 120–134 (YGLKKARRAPQFSKR) the composition is skewed to basic residues.

This sequence belongs to the universal ribosomal protein uS9 family.

This is Small ribosomal subunit protein uS9 (rpsI) from Thermotoga maritima (strain ATCC 43589 / DSM 3109 / JCM 10099 / NBRC 100826 / MSB8).